The primary structure comprises 169 residues: Ion-translocating oxidoreductase complex subunit B (169 aa).

Residues 1 to 23 (MIISIIIFSILSFILGVIVSLVS) are hydrophobic. Residues 30–89 (SNLSLINDIDELLPQMQCAQCGYPGCYAYSQAIVDGNENIYKCIPGGKEVVLKLENLLNK) enclose the 4Fe-4S domain. The [4Fe-4S] cluster site is built by Cys47, Cys50, Cys55, Cys72, Cys116, Cys119, Cys122, Cys126, Cys146, Cys149, Cys152, and Cys156. 2 4Fe-4S ferredoxin-type domains span residues 107 to 136 (SIVE…GTYN) and 137 to 166 (FRHT…KKIM).

It belongs to the 4Fe4S bacterial-type ferredoxin family. RnfB subfamily. In terms of assembly, the complex is composed of six subunits: RnfA, RnfB, RnfC, RnfD, RnfE and RnfG. It depends on [4Fe-4S] cluster as a cofactor.

The protein resides in the cell inner membrane. In terms of biological role, part of a membrane-bound complex that couples electron transfer with translocation of ions across the membrane. The polypeptide is Ion-translocating oxidoreductase complex subunit B (Buchnera aphidicola subsp. Baizongia pistaciae (strain Bp)).